The following is a 266-amino-acid chain: Probable phosphoadenosine phosphosulfate reductase (266 aa).

The segment at 219–246 (TQPVREGEDERAGRWRGREKTECGLHSH) is disordered. The segment covering 223–243 (REGEDERAGRWRGREKTECGL) has biased composition (basic and acidic residues).

This sequence belongs to the PAPS reductase family. CysH subfamily.

Its subcellular location is the cytoplasm. It is found in the nucleus. The catalysed reaction is [thioredoxin]-disulfide + sulfite + adenosine 3',5'-bisphosphate + 2 H(+) = [thioredoxin]-dithiol + 3'-phosphoadenylyl sulfate. The protein operates within sulfur metabolism; hydrogen sulfide biosynthesis; sulfite from sulfate: step 3/3. In terms of biological role, the NADP dependent reduction of PAPS into sulfite involves thioredoxin which probably plays the role of a thiol carrier. Required for methionine synthesis. The sequence is that of Probable phosphoadenosine phosphosulfate reductase (met16) from Schizosaccharomyces pombe (strain 972 / ATCC 24843) (Fission yeast).